Reading from the N-terminus, the 269-residue chain is MDKKEKRPTVLFFDSGVGGFSVYREAKKLLPNWHYLYCFDNAGFPYSERKEESIIHRTLAACQLINQRYPLDAIVIACNTASTVVLPPLRAAFDIPIIGTVPAIKPASEITKTKHIGLLATKGTVKRHYIDELIDKFAQDCIVERLGTTKLVEIAEQKIRGHSVDLISLKDELSSWAGMADLDTLVLGCTHFPLIKDEIQLCLPQVKYFMDPSAAIAKRIKYLLDDKNLQAQNEKYNQMFCTAHFPEESQFKKALHLWGFESLEVIKID.

Residues 14–15 and 46–47 contribute to the substrate site; these read DS and YS. The active-site Proton donor/acceptor is cysteine 78. Substrate is bound at residue 79 to 80; that stretch reads NT. Cysteine 189 serves as the catalytic Proton donor/acceptor. A substrate-binding site is contributed by 190-191; sequence TH.

The protein belongs to the aspartate/glutamate racemases family.

The catalysed reaction is L-glutamate = D-glutamate. The protein operates within cell wall biogenesis; peptidoglycan biosynthesis. Its function is as follows. Provides the (R)-glutamate required for cell wall biosynthesis. The protein is Glutamate racemase of Haemophilus influenzae (strain PittGG).